The primary structure comprises 216 residues: Adenylate kinase (216 aa).

10 to 15 provides a ligand contact to ATP; the sequence is GAGKGT. The interval 30–59 is NMP; sequence STGDIFRKNISEKTPLGVKAKEYMDKGQLV. AMP-binding positions include Thr31, Arg36, 57–59, 85–88, and Gln92; these read QLV and GFPR. The LID stretch occupies residues 126 to 163; that stretch reads GRRVCPSCGASYHIKFNPPKIEGLCDVCKKEVIQRKDD. Arg127 provides a ligand contact to ATP. Cys130 and Cys133 together coordinate Zn(2+). 136-137 is a binding site for ATP; that stretch reads SY. Residues Cys150 and Cys153 each coordinate Zn(2+). The AMP site is built by Arg160 and Arg171. Gln199 lines the ATP pocket.

The protein belongs to the adenylate kinase family. In terms of assembly, monomer.

The protein resides in the cytoplasm. The enzyme catalyses AMP + ATP = 2 ADP. It participates in purine metabolism; AMP biosynthesis via salvage pathway; AMP from ADP: step 1/1. Its function is as follows. Catalyzes the reversible transfer of the terminal phosphate group between ATP and AMP. Plays an important role in cellular energy homeostasis and in adenine nucleotide metabolism. The protein is Adenylate kinase of Clostridium novyi (strain NT).